Reading from the N-terminus, the 89-residue chain is Small ribosomal subunit protein uS15 (89 aa).

The protein belongs to the universal ribosomal protein uS15 family. As to quaternary structure, part of the 30S ribosomal subunit. Forms a bridge to the 50S subunit in the 70S ribosome, contacting the 23S rRNA.

One of the primary rRNA binding proteins, it binds directly to 16S rRNA where it helps nucleate assembly of the platform of the 30S subunit by binding and bridging several RNA helices of the 16S rRNA. Functionally, forms an intersubunit bridge (bridge B4) with the 23S rRNA of the 50S subunit in the ribosome. The protein is Small ribosomal subunit protein uS15 of Mycobacteroides abscessus (strain ATCC 19977 / DSM 44196 / CCUG 20993 / CIP 104536 / JCM 13569 / NCTC 13031 / TMC 1543 / L948) (Mycobacterium abscessus).